The following is a 240-amino-acid chain: Diglucosylglycerate octanoyltransferase (240 aa).

Belongs to the OctT acyltransferase family. As to quaternary structure, homotetramer.

The catalysed reaction is (2R)-2-O-[alpha-D-glucopyranosyl-(1-&gt;6)-alpha-D-glucopyranosyl]-glycerate + octanoyl-CoA = (2R)-2-O-[6-O-octanoyl-alpha-D-glucopyranosyl-(1-&gt;6)-alpha-D-glucopyranosyl]-glycerate + CoA. Functionally, sugar octanoyltransferase likely involved in the biosynthesis of mycobacterial methylglucose lipopolysaccharide (MGLP). Catalyzes the transfer of an octanoyl group from octanoyl-CoA to the C6 OH of the second glucose in diglucosylglycerate (DGG). Can also use hexanoyl-CoA as acyl donor in vitro. DGG is the preferred acceptor, but to a lesser extent, GG (glucosylglycerate) can be used as substrate. DGG and GG are the two earliest intermediates in MGLP biosynthesis. This chain is Diglucosylglycerate octanoyltransferase, found in Mycolicibacterium hassiacum (strain DSM 44199 / CIP 105218 / JCM 12690 / 3849) (Mycobacterium hassiacum).